We begin with the raw amino-acid sequence, 105 residues long: Large ribosomal subunit protein bL21 (105 aa).

The protein belongs to the bacterial ribosomal protein bL21 family. Part of the 50S ribosomal subunit. Contacts protein L20.

Its function is as follows. This protein binds to 23S rRNA in the presence of protein L20. This is Large ribosomal subunit protein bL21 from Stenotrophomonas maltophilia (strain R551-3).